Here is a 362-residue protein sequence, read N- to C-terminus: tRNA N6-adenosine threonylcarbamoyltransferase (362 aa).

Fe cation-binding residues include His-120 and His-124. Substrate contacts are provided by residues 142–146, Asp-175, Gly-188, and Asn-288; that span reads LASGG. Asp-316 is a binding site for Fe cation. Over residues 342-351 the composition is skewed to basic and acidic residues; that stretch reads RPRWPLDPDA. Residues 342-362 form a disordered region; sequence RPRWPLDPDAPKAAGAGGVKA.

Belongs to the KAE1 / TsaD family. Fe(2+) serves as cofactor.

Its subcellular location is the cytoplasm. It catalyses the reaction L-threonylcarbamoyladenylate + adenosine(37) in tRNA = N(6)-L-threonylcarbamoyladenosine(37) in tRNA + AMP + H(+). Functionally, required for the formation of a threonylcarbamoyl group on adenosine at position 37 (t(6)A37) in tRNAs that read codons beginning with adenine. Is involved in the transfer of the threonylcarbamoyl moiety of threonylcarbamoyl-AMP (TC-AMP) to the N6 group of A37, together with TsaE and TsaB. TsaD likely plays a direct catalytic role in this reaction. The protein is tRNA N6-adenosine threonylcarbamoyltransferase of Rhodospirillum rubrum (strain ATCC 11170 / ATH 1.1.1 / DSM 467 / LMG 4362 / NCIMB 8255 / S1).